Reading from the N-terminus, the 482-residue chain is Nucleoside triphosphate pyrophosphatase/Nudix hydrolase fusion protein (482 aa).

Residues 1-299 (MSIPLILASK…DLWNVGRGEL (299 aa)) form a maf-like region. Asp167 acts as the Proton acceptor in catalysis. Residues 338-475 (GTNGASGILL…TDWPRFAARL (138 aa)) enclose the Nudix hydrolase domain.

This sequence in the N-terminal section; belongs to the Maf family. A divalent metal cation is required as a cofactor.

The protein resides in the cytoplasm. It catalyses the reaction a ribonucleoside 5'-triphosphate + H2O = a ribonucleoside 5'-phosphate + diphosphate + H(+). The catalysed reaction is a 2'-deoxyribonucleoside 5'-triphosphate + H2O = a 2'-deoxyribonucleoside 5'-phosphate + diphosphate + H(+). Nucleoside triphosphate pyrophosphatase. May have a dual role in cell division arrest and in preventing the incorporation of modified nucleotides into cellular nucleic acids. This Bifidobacterium longum (strain NCC 2705) protein is Nucleoside triphosphate pyrophosphatase/Nudix hydrolase fusion protein.